The sequence spans 566 residues: Oxygen-dependent choline dehydrogenase (566 aa).

7–36 provides a ligand contact to FAD; sequence DYIICGAGSAGNVLATRLTEDPDVTVLLLE. Residues 180–202 are disordered; that stretch reads NGYQQEGFGPMDRTVTPKGRRAS. Catalysis depends on histidine 474, which acts as the Proton acceptor.

This sequence belongs to the GMC oxidoreductase family. The cofactor is FAD.

The catalysed reaction is choline + A = betaine aldehyde + AH2. It carries out the reaction betaine aldehyde + NAD(+) + H2O = glycine betaine + NADH + 2 H(+). It participates in amine and polyamine biosynthesis; betaine biosynthesis via choline pathway; betaine aldehyde from choline (cytochrome c reductase route): step 1/1. Functionally, involved in the biosynthesis of the osmoprotectant glycine betaine. Catalyzes the oxidation of choline to betaine aldehyde and betaine aldehyde to glycine betaine at the same rate. The chain is Oxygen-dependent choline dehydrogenase from Burkholderia lata (strain ATCC 17760 / DSM 23089 / LMG 22485 / NCIMB 9086 / R18194 / 383).